Here is a 124-residue protein sequence, read N- to C-terminus: Large ribosomal subunit protein mL51 (124 aa).

Residues 1–31 (MSVFGGLWRSAVNLCQSSRLFSTGSCARIRM) constitute a mitochondrion transit peptide.

This sequence belongs to the mitochondrion-specific ribosomal protein mL51 family. As to quaternary structure, component of the mitochondrial ribosome large subunit (39S) which comprises a 16S rRNA and about 50 distinct proteins.

It localises to the mitochondrion. This chain is Large ribosomal subunit protein mL51 (mrpl51), found in Danio rerio (Zebrafish).